The chain runs to 320 residues: 7-acetyl-epi-neemfruitin B aldo-keto reductase (320 aa).

NADP(+) is bound at residue Asp-51. Tyr-56 functions as the Proton donor in the catalytic mechanism. Residues Gln-186 and 264 to 272 (FNKQRMEEN) contribute to the NADP(+) site.

It belongs to the aldo/keto reductase family. As to expression, mainly expressed in petioles and, to a lower extent, in roots.

The enzyme catalyses 7-acetyl-epi-neemfruitin B + AH2 + H2O = (1S,3bR,4R,5aR,9aR,9bR,11aS)-1-[(4R)-5-[(2S)-3,3-dimethyloxiran-2-yl]-1,4-dihydroxybutan-2-yl]-3b,6,6,9a,11a-pentamethyl-7-oxo-1H,2H,3bH,4H,5H,5aH,6H,7H,9aH,9bH,10H,11H,11aH-cyclopenta[a]phenanthren-4-yl acetate + acetate + A + H(+). The protein operates within secondary metabolite biosynthesis; terpenoid biosynthesis. Functionally, aldo-keto reductase involved in the biosynthesis of limonoids triterpene natural products such as azadirachtin, an antifeedant widely used as bioinsecticide, and possessing many medicinal applications including anti-tumoral, anti-malarial, anti-rheumatic, antibacterial, anti-inflammatory, anti-pyretic and diuretic effects. Can use 7-acetyl-epi-neemfruitin B as substrate. The protein is 7-acetyl-epi-neemfruitin B aldo-keto reductase of Melia azedarach (Chinaberry tree).